Reading from the N-terminus, the 63-residue chain is Cecropin-A (63 aa).

An N-terminal signal peptide occupies residues 1-22 (MNFVRILSFVFALVLALGAVSA). Residues 23 to 26 (APEP) constitute a propeptide that is removed on maturation. L61 is modified (leucine amide).

The protein belongs to the cecropin family. Highest expression in fat body and hemocytes. Is also expressed in Malpighian tubules and to a much lesser extent in midgut. Not present in silk gland.

The protein localises to the secreted. Cecropins have lytic and antibacterial activity against several Gram-positive and Gram-negative bacteria. The chain is Cecropin-A (CECA) from Bombyx mori (Silk moth).